The primary structure comprises 485 residues: CUGBP Elav-like family member 5 (485 aa).

Over residues 1–11 (MARLTESEARR) the composition is skewed to basic and acidic residues. Residues 1 to 40 (MARLTESEARRQQQQLLQPRPSPVGSSGPEPPGGQPDGMK) are disordered. The span at 12 to 28 (QQQQLLQPRPSPVGSSG) shows a compositional bias: low complexity. 3 RRM domains span residues 45–126 (IKLF…PADS), 134–214 (RKLF…FADT), and 400–478 (CNLF…LKRP).

It belongs to the CELF/BRUNOL family. As to expression, expressed in brain.

The protein localises to the nucleus. It is found in the cytoplasm. Functionally, RNA-binding protein implicated in the regulation of pre-mRNA alternative splicing. Mediates exon inclusion and/or exclusion in pre-mRNA that are subject to tissue-specific and developmentally regulated alternative splicing. Specifically activates exon 5 inclusion of cardiac isoforms of TNNT2 during heart remodeling at the juvenile to adult transition. Binds to muscle-specific splicing enhancer (MSE) intronic sites flanking the alternative exon 5 of TNNT2 pre-mRNA. This chain is CUGBP Elav-like family member 5 (CELF5), found in Homo sapiens (Human).